The primary structure comprises 352 residues: Fatty acid desaturase (352 aa).

2 helical membrane-spanning segments follow: residues 28 to 48 (SLIQLLNTFIPFFGLWFLAYL) and 55 to 75 (LLTLALTVIAAGFLTRIFIIF). The Histidine box-1 signature appears at 76-80 (HDCCH). Residues 89-109 (YNHILGFLTGVLTLFPYLQWQ) form a helical membrane-spanning segment. The short motif at 112 to 116 (HSIHH) is the Histidine box-2 element. A run of 3 helical transmembrane segments spans residues 151-171 (LYRNPFIMFILGPIYVFLITN), 186-206 (TYLTNLAIVALAAACCLIFGW), and 209-229 (FLLVQGPIFLISGSIGVWLFY). A Histidine box-3 motif is present at residues 274–278 (HHVHH).

The protein belongs to the fatty acid desaturase type 1 family.

The protein resides in the cell membrane. The protein operates within lipid metabolism; fatty acid metabolism. Catalyzes the introduction of a cis-double bond at the delta(5) position of existing saturated fatty acids attached to membrane phospholipids. It is not strictly specific for palmitic acid (C16) but can also accept C14 as well as C18 species to yield unsaturated fatty acids. The sequence is that of Fatty acid desaturase (des) from Bacillus subtilis (strain 168).